Reading from the N-terminus, the 322-residue chain is Lipoyl synthase (322 aa).

[4Fe-4S] cluster is bound by residues cysteine 66, cysteine 71, cysteine 77, cysteine 92, cysteine 96, cysteine 99, and serine 306. Positions 78–295 constitute a Radical SAM core domain; that stretch reads FSKGTATFMI…EKEAYELGFS (218 aa).

This sequence belongs to the radical SAM superfamily. Lipoyl synthase family. [4Fe-4S] cluster is required as a cofactor.

It localises to the cytoplasm. It catalyses the reaction [[Fe-S] cluster scaffold protein carrying a second [4Fe-4S](2+) cluster] + N(6)-octanoyl-L-lysyl-[protein] + 2 oxidized [2Fe-2S]-[ferredoxin] + 2 S-adenosyl-L-methionine + 4 H(+) = [[Fe-S] cluster scaffold protein] + N(6)-[(R)-dihydrolipoyl]-L-lysyl-[protein] + 4 Fe(3+) + 2 hydrogen sulfide + 2 5'-deoxyadenosine + 2 L-methionine + 2 reduced [2Fe-2S]-[ferredoxin]. Its pathway is protein modification; protein lipoylation via endogenous pathway; protein N(6)-(lipoyl)lysine from octanoyl-[acyl-carrier-protein]: step 2/2. In terms of biological role, catalyzes the radical-mediated insertion of two sulfur atoms into the C-6 and C-8 positions of the octanoyl moiety bound to the lipoyl domains of lipoate-dependent enzymes, thereby converting the octanoylated domains into lipoylated derivatives. This chain is Lipoyl synthase, found in Neisseria meningitidis serogroup C (strain 053442).